Consider the following 295-residue polypeptide: Protease HtpX (295 aa).

The next 2 helical transmembrane spans lie at 5 to 25 (VILF…SMRL) and 43 to 63 (ALLI…LAIS). Residue His148 coordinates Zn(2+). Glu149 is an active-site residue. His152 is a binding site for Zn(2+). The next 2 membrane-spanning stretches (helical) occupy residues 159-179 (VTLA…ARII) and 198-218 (FFIT…LIVL). Glu225 contributes to the Zn(2+) binding site.

It belongs to the peptidase M48B family. It depends on Zn(2+) as a cofactor.

The protein localises to the cell inner membrane. This Nitrosococcus oceani (strain ATCC 19707 / BCRC 17464 / JCM 30415 / NCIMB 11848 / C-107) protein is Protease HtpX.